Consider the following 195-residue polypeptide: Imidazoleglycerol-phosphate dehydratase (195 aa).

It belongs to the imidazoleglycerol-phosphate dehydratase family.

It is found in the cytoplasm. It carries out the reaction D-erythro-1-(imidazol-4-yl)glycerol 3-phosphate = 3-(imidazol-4-yl)-2-oxopropyl phosphate + H2O. It functions in the pathway amino-acid biosynthesis; L-histidine biosynthesis; L-histidine from 5-phospho-alpha-D-ribose 1-diphosphate: step 6/9. This is Imidazoleglycerol-phosphate dehydratase from Beijerinckia indica subsp. indica (strain ATCC 9039 / DSM 1715 / NCIMB 8712).